A 365-amino-acid polypeptide reads, in one-letter code: tRNA N6-adenosine threonylcarbamoyltransferase (365 aa).

2 residues coordinate Fe cation: His119 and His123. Residues 141–145 (LVSGG), Asp174, and Gly187 contribute to the substrate site. The interval 184 to 203 (QPGGPSVEGEARQGDPKRFR) is disordered. Basic and acidic residues predominate over residues 192–201 (GEARQGDPKR). Asn289 lines the substrate pocket. Residue Asp317 participates in Fe cation binding. The tract at residues 342-365 (ARPRWPLDQSSPAMLGSGKKGAKA) is disordered.

Belongs to the KAE1 / TsaD family. Requires Fe(2+) as cofactor.

The protein resides in the cytoplasm. It catalyses the reaction L-threonylcarbamoyladenylate + adenosine(37) in tRNA = N(6)-L-threonylcarbamoyladenosine(37) in tRNA + AMP + H(+). Functionally, required for the formation of a threonylcarbamoyl group on adenosine at position 37 (t(6)A37) in tRNAs that read codons beginning with adenine. Is involved in the transfer of the threonylcarbamoyl moiety of threonylcarbamoyl-AMP (TC-AMP) to the N6 group of A37, together with TsaE and TsaB. TsaD likely plays a direct catalytic role in this reaction. This is tRNA N6-adenosine threonylcarbamoyltransferase from Ruegeria pomeroyi (strain ATCC 700808 / DSM 15171 / DSS-3) (Silicibacter pomeroyi).